The primary structure comprises 287 residues: Large ribosomal subunit protein uL2 (287 aa).

The disordered stretch occupies residues 221–287 (RGSVMNPCDH…SKRSRGGRDS (67 aa)). The span at 258–287 (KTRKKNKPSNKLVVRRRRRVSKRSRGGRDS) shows a compositional bias: basic residues.

This sequence belongs to the universal ribosomal protein uL2 family. In terms of assembly, part of the 50S ribosomal subunit. Forms a bridge to the 30S subunit in the 70S ribosome.

Its function is as follows. One of the primary rRNA binding proteins. Required for association of the 30S and 50S subunits to form the 70S ribosome, for tRNA binding and peptide bond formation. It has been suggested to have peptidyltransferase activity; this is somewhat controversial. Makes several contacts with the 16S rRNA in the 70S ribosome. The chain is Large ribosomal subunit protein uL2 from Prochlorococcus marinus (strain AS9601).